Here is a 196-residue protein sequence, read N- to C-terminus: Molybdenum cofactor guanylyltransferase (196 aa).

Residues 10-12 (LAG), Lys-23, Asn-51, Asp-69, and Asp-99 each bind GTP. Asp-99 is a Mg(2+) binding site.

It belongs to the MobA family. Monomer. Mg(2+) serves as cofactor.

The protein resides in the cytoplasm. It catalyses the reaction Mo-molybdopterin + GTP + H(+) = Mo-molybdopterin guanine dinucleotide + diphosphate. Its function is as follows. Transfers a GMP moiety from GTP to Mo-molybdopterin (Mo-MPT) cofactor (Moco or molybdenum cofactor) to form Mo-molybdopterin guanine dinucleotide (Mo-MGD) cofactor. This chain is Molybdenum cofactor guanylyltransferase, found in Shewanella frigidimarina (strain NCIMB 400).